A 227-amino-acid chain; its full sequence is uncharacterized protein (227 aa).

This is an uncharacterized protein from Caenorhabditis elegans.